Consider the following 356-residue polypeptide: Phospho-N-acetylmuramoyl-pentapeptide-transferase (356 aa).

Transmembrane regions (helical) follow at residues 27-47 (ATLM…INML), 73-93 (TMGG…WMDL), 97-117 (FVWA…LDDL), 138-158 (FLVA…WLYV), 165-185 (AIPL…GAGN), 195-215 (GLAI…AYLA), 232-252 (AGEL…FLWF), 258-278 (AVFM…AIAV), 284-304 (IVLA…IIQV), and 333-353 (KVVI…LATL).

It belongs to the glycosyltransferase 4 family. MraY subfamily. Mg(2+) serves as cofactor.

The protein resides in the cell inner membrane. The catalysed reaction is UDP-N-acetyl-alpha-D-muramoyl-L-alanyl-gamma-D-glutamyl-meso-2,6-diaminopimeloyl-D-alanyl-D-alanine + di-trans,octa-cis-undecaprenyl phosphate = di-trans,octa-cis-undecaprenyl diphospho-N-acetyl-alpha-D-muramoyl-L-alanyl-D-glutamyl-meso-2,6-diaminopimeloyl-D-alanyl-D-alanine + UMP. It participates in cell wall biogenesis; peptidoglycan biosynthesis. Functionally, catalyzes the initial step of the lipid cycle reactions in the biosynthesis of the cell wall peptidoglycan: transfers peptidoglycan precursor phospho-MurNAc-pentapeptide from UDP-MurNAc-pentapeptide onto the lipid carrier undecaprenyl phosphate, yielding undecaprenyl-pyrophosphoryl-MurNAc-pentapeptide, known as lipid I. The chain is Phospho-N-acetylmuramoyl-pentapeptide-transferase from Erythrobacter litoralis (strain HTCC2594).